Consider the following 151-residue polypeptide: UPF0208 membrane protein ESA_00924 (151 aa).

2 consecutive transmembrane segments (helical) span residues 46–65 (FAIRIMPPVAVFTLCWQIAL) and 69–91 (LGPAVATALFALSMPMQGLWWLG).

This sequence belongs to the UPF0208 family.

It localises to the cell inner membrane. The chain is UPF0208 membrane protein ESA_00924 from Cronobacter sakazakii (strain ATCC BAA-894) (Enterobacter sakazakii).